Reading from the N-terminus, the 351-residue chain is Uroporphyrinogen decarboxylase (351 aa).

Substrate-binding positions include 27 to 31 (RQAGR), D77, Y154, T209, and H327.

This sequence belongs to the uroporphyrinogen decarboxylase family. As to quaternary structure, homodimer.

It localises to the cytoplasm. The catalysed reaction is uroporphyrinogen III + 4 H(+) = coproporphyrinogen III + 4 CO2. The protein operates within porphyrin-containing compound metabolism; protoporphyrin-IX biosynthesis; coproporphyrinogen-III from 5-aminolevulinate: step 4/4. Catalyzes the decarboxylation of four acetate groups of uroporphyrinogen-III to yield coproporphyrinogen-III. This Thioalkalivibrio sulfidiphilus (strain HL-EbGR7) protein is Uroporphyrinogen decarboxylase.